A 440-amino-acid chain; its full sequence is 23S rRNA (uracil(1939)-C(5))-methyltransferase RlmD (440 aa).

The TRAM domain maps to 8-69; the sequence is PQKINKLQRE…RQFGLATTKK (62 aa). [4Fe-4S] cluster-binding residues include Cys-82, Cys-88, Cys-91, and Cys-169. The S-adenosyl-L-methionine site is built by Gln-272, Phe-301, Asn-306, Glu-322, Asp-349, and Asp-370. Cys-396 functions as the Nucleophile in the catalytic mechanism.

Belongs to the class I-like SAM-binding methyltransferase superfamily. RNA M5U methyltransferase family. RlmD subfamily.

It carries out the reaction uridine(1939) in 23S rRNA + S-adenosyl-L-methionine = 5-methyluridine(1939) in 23S rRNA + S-adenosyl-L-homocysteine + H(+). Its function is as follows. Catalyzes the formation of 5-methyl-uridine at position 1939 (m5U1939) in 23S rRNA. In Mannheimia succiniciproducens (strain KCTC 0769BP / MBEL55E), this protein is 23S rRNA (uracil(1939)-C(5))-methyltransferase RlmD.